The primary structure comprises 445 residues: ATP synthase subunit b-delta (445 aa).

Residues 1 to 168 are ATP synthase subunit b; the sequence is MSIFIGQLIG…PSSAVLEAGA (168 aa). Residues 3–23 traverse the membrane as a helical segment; the sequence is IFIGQLIGFAVIVFILVKWVV. Residues 169 to 445 are ATP synthase subunit delta; that stretch reads SLNLRAASRE…LAAARTGLPD (277 aa).

It in the N-terminal section; belongs to the ATPase B chain family. The protein in the C-terminal section; belongs to the ATPase delta chain family. As to quaternary structure, F-type ATPases have 2 components, F(1) - the catalytic core - and F(0) - the membrane proton channel. F(1) has five subunits: alpha(3), beta(3), gamma(1), delta(1), epsilon(1). F(0) has three main subunits: a(1), b(2) and c(10-14). The alpha and beta chains form an alternating ring which encloses part of the gamma chain. F(1) is attached to F(0) by a central stalk formed by the gamma and epsilon chains, while a peripheral stalk is formed by the delta and b chains.

The protein resides in the cell membrane. In terms of biological role, f(1)F(0) ATP synthase produces ATP from ADP in the presence of a proton or sodium gradient. F-type ATPases consist of two structural domains, F(1) containing the extramembraneous catalytic core and F(0) containing the membrane proton channel, linked together by a central stalk and a peripheral stalk. During catalysis, ATP synthesis in the catalytic domain of F(1) is coupled via a rotary mechanism of the central stalk subunits to proton translocation. Functionally, this fusion protein includes a component of the F(0) channel (subunit b) and of the F(1) subunit (subunit delta). Two copies of subunit b and one of delta together form the peripheral 'stator' stalk which links F(1) to F(0). This is ATP synthase subunit b-delta (atpFH) from Mycolicibacterium vanbaalenii (strain DSM 7251 / JCM 13017 / BCRC 16820 / KCTC 9966 / NRRL B-24157 / PYR-1) (Mycobacterium vanbaalenii).